We begin with the raw amino-acid sequence, 469 residues long: Probable Xaa-Pro aminopeptidase PEPP (469 aa).

Asp-264, Asp-275, Glu-398, and Glu-438 together coordinate Mn(2+).

Belongs to the peptidase M24B family. Requires Mn(2+) as cofactor.

It catalyses the reaction Release of any N-terminal amino acid, including proline, that is linked to proline, even from a dipeptide or tripeptide.. Catalyzes the removal of a penultimate prolyl residue from the N-termini of peptides. The sequence is that of Probable Xaa-Pro aminopeptidase PEPP (PEPP) from Ajellomyces capsulatus (strain H143) (Darling's disease fungus).